The chain runs to 622 residues: Low affinity potassium transport system protein Kup (622 aa).

12 consecutive transmembrane segments (helical) span residues 9–29 (LPAI…TSPL), 49–69 (VFGF…IKYL), 103–123 (VIMG…TPAI), 137–157 (PQLD…LFMI), 165–185 (VGQL…GLGL), 213–233 (VSFI…ALYA), 247–267 (WFTV…ALLL), 276–296 (PFFL…AALA), 337–357 (IYIP…IVSF), 363–383 (LAAA…ILST), 396–416 (FVAL…TANL), and 419–439 (LLSG…VMTT).

Belongs to the HAK/KUP transporter (TC 2.A.72) family.

It localises to the cell inner membrane. It carries out the reaction K(+)(in) + H(+)(in) = K(+)(out) + H(+)(out). Responsible for the low-affinity transport of potassium into the cell. Likely operates as a K(+):H(+) symporter. In Escherichia coli O6:K15:H31 (strain 536 / UPEC), this protein is Low affinity potassium transport system protein Kup.